Consider the following 122-residue polypeptide: Large ribosomal subunit protein uL14 (122 aa).

The protein belongs to the universal ribosomal protein uL14 family. As to quaternary structure, part of the 50S ribosomal subunit. Forms a cluster with proteins L3 and L19. In the 70S ribosome, L14 and L19 interact and together make contacts with the 16S rRNA in bridges B5 and B8.

Functionally, binds to 23S rRNA. Forms part of two intersubunit bridges in the 70S ribosome. This chain is Large ribosomal subunit protein uL14, found in Syntrophobacter fumaroxidans (strain DSM 10017 / MPOB).